We begin with the raw amino-acid sequence, 435 residues long: MIDRYLTPEMKVLWSEANKYRAWLKVELSALQAQARHGEVPAEAHAALVQKSEADPLDDAFAQQVAEIEAVTRHDIVAFTRALTERYGEEARFIHHGLTSTDVVDTAQNLLLDEAMGLIITDVQTLREVCRMQAAAHKHTPVVGRTHGIHAEPMTFGLKFLNWMATLDRDLERLQAARGRVQVVMLSGSVGTYAHVSPKIEEEVAESWGWHAAPVTNQTLARDRHAEVLAALAILGTTLEKIAVEIRHLQRSEVREAMEPFGKGQTGSSSMPHKKNPILTENVTGFARLLRGFLATGLENVALWHERDISHSSAERVILPDATASASYATRRLTGVLRDLVVFPERMLKNLDDLGGLVFSQRVLHALIDDKGMMREAAYGIVQRNALKSWETGEGLRDLLKADPENPLSDAELDAAFDLQWYLRHVDDIYARFGM.

N(6)-(1,2-dicarboxyethyl)-AMP is bound by residues 4–5, 73–75, and 99–100; these read RY, RHD, and TS. Histidine 147 acts as the Proton donor/acceptor in catalysis. Glutamine 218 serves as a coordination point for N(6)-(1,2-dicarboxyethyl)-AMP. Catalysis depends on serine 268, which acts as the Proton donor/acceptor. N(6)-(1,2-dicarboxyethyl)-AMP-binding positions include serine 269, 274 to 276, asparagine 282, and 313 to 317; these read KKN and SAERV.

The protein belongs to the lyase 1 family. Adenylosuccinate lyase subfamily. Homotetramer. Residues from neighboring subunits contribute catalytic and substrate-binding residues to each active site.

The catalysed reaction is N(6)-(1,2-dicarboxyethyl)-AMP = fumarate + AMP. It carries out the reaction (2S)-2-[5-amino-1-(5-phospho-beta-D-ribosyl)imidazole-4-carboxamido]succinate = 5-amino-1-(5-phospho-beta-D-ribosyl)imidazole-4-carboxamide + fumarate. Its pathway is purine metabolism; AMP biosynthesis via de novo pathway; AMP from IMP: step 2/2. The protein operates within purine metabolism; IMP biosynthesis via de novo pathway; 5-amino-1-(5-phospho-D-ribosyl)imidazole-4-carboxamide from 5-amino-1-(5-phospho-D-ribosyl)imidazole-4-carboxylate: step 2/2. In terms of biological role, catalyzes two reactions in de novo purine nucleotide biosynthesis. Catalyzes the breakdown of 5-aminoimidazole- (N-succinylocarboxamide) ribotide (SAICAR or 2-[5-amino-1-(5-phospho-beta-D-ribosyl)imidazole-4-carboxamido]succinate) to 5-aminoimidazole-4-carboxamide ribotide (AICAR or 5-amino-1-(5-phospho-beta-D-ribosyl)imidazole-4-carboxamide) and fumarate, and of adenylosuccinate (ADS or N(6)-(1,2-dicarboxyethyl)-AMP) to adenosine monophosphate (AMP) and fumarate. The chain is Adenylosuccinate lyase (purB) from Deinococcus radiodurans (strain ATCC 13939 / DSM 20539 / JCM 16871 / CCUG 27074 / LMG 4051 / NBRC 15346 / NCIMB 9279 / VKM B-1422 / R1).